A 395-amino-acid polypeptide reads, in one-letter code: Na(+)/H(+) antiporter NhaA (395 aa).

Transmembrane regions (helical) follow at residues 18–38 (AGGILLLVFSVGAVIFANSPL), 64–84 (LLMWVNDGFMAIFFVLVGLEV), 100–120 (IFPAIAACGGMIVPALVYWLV), 129–149 (GGWAIPMATDIAFAIGVLVLL), 160–180 (FLLALAIIDDLGAIIVIALFF), 182–202 (HDLSTKALILASIAIVGLILL), 205–225 (FKVSNLIAYVVVGIILWVSVL), 226–246 (KSGVHATLAGVIIGFCVPLKG), 266–286 (FLILPLFAFCNAGIPLSGLGM), 295–315 (LGVTLGLLLGKPIGVFLFSYL), 333–353 (IFAVSVLCGIGFTMSMFLASL), and 368–388 (LGILFGSSVSAVVGYWLLFVT).

Belongs to the NhaA Na(+)/H(+) (TC 2.A.33) antiporter family.

The protein localises to the cell inner membrane. The catalysed reaction is Na(+)(in) + 2 H(+)(out) = Na(+)(out) + 2 H(+)(in). Its function is as follows. Na(+)/H(+) antiporter that extrudes sodium in exchange for external protons. This Histophilus somni (strain 129Pt) (Haemophilus somnus) protein is Na(+)/H(+) antiporter NhaA.